Consider the following 283-residue polypeptide: 2-hydroxy-6-oxononadienedioate/2-hydroxy-6-oxononatrienedioate hydrolase (283 aa).

One can recognise an AB hydrolase-1 domain in the interval 35 to 269 (VVVMFHGSGP…KCGHWAQWEH (235 aa)). The active-site Proton acceptor is the His263.

It belongs to the AB hydrolase superfamily. MhpC family. As to quaternary structure, homodimer.

The catalysed reaction is (2Z,4E)-2-hydroxy-6-oxonona-2,4-dienedioate + H2O = (2Z)-2-hydroxypenta-2,4-dienoate + succinate + H(+). It catalyses the reaction (2Z,4E,7E)-2-hydroxy-6-oxonona-2,4,7-trienedioate + H2O = (2Z)-2-hydroxypenta-2,4-dienoate + fumarate + H(+). It participates in aromatic compound metabolism; 3-phenylpropanoate degradation. Catalyzes the cleavage of the C5-C6 bond of 2-hydroxy-6-oxononadienedioate and 2-hydroxy-6-oxononatrienedioate, a dienol ring fission product of the bacterial meta-cleavage pathway for degradation of phenylpropionic acid. This is 2-hydroxy-6-oxononadienedioate/2-hydroxy-6-oxononatrienedioate hydrolase from Pseudomonas sp.